Here is a 184-residue protein sequence, read N- to C-terminus: MARVFHVAEKVEIPENVAVEVDGLRVTVKGPKGIITRDFSHARGVFIRLEDRVVIVETFVADRKQKALVGTIAAHIRNMITGVVRGYRYKLKIIFSHFPITVSVDEKNKVVRIRNFMGEKSDRIAKIYGNVKVKVSGEDIIIEGVDIEEVGLTAASIERATRVTDRDRRVFMDGIYIYEKGEAL.

This sequence belongs to the universal ribosomal protein uL6 family. Part of the 50S ribosomal subunit.

Its function is as follows. This protein binds to the 23S rRNA, and is important in its secondary structure. It is located near the subunit interface in the base of the L7/L12 stalk, and near the tRNA binding site of the peptidyltransferase center. The chain is Large ribosomal subunit protein uL6 from Desulfurococcus amylolyticus (strain DSM 18924 / JCM 16383 / VKM B-2413 / 1221n) (Desulfurococcus kamchatkensis).